A 336-amino-acid chain; its full sequence is uncharacterized protein (336 aa).

Residues tyrosine 196–glutamate 222 are disordered. A compositionally biased stretch (acidic residues) spans aspartate 201–serine 215. Serine 211 bears the Phosphoserine mark.

This is an uncharacterized protein from Schizosaccharomyces pombe (strain 972 / ATCC 24843) (Fission yeast).